Here is a 182-residue protein sequence, read N- to C-terminus: Bifunctional protein PyrR (182 aa).

The short motif at 99 to 111 (IVLVDDVLFTGRT) is the PRPP-binding element.

The protein belongs to the purine/pyrimidine phosphoribosyltransferase family. PyrR subfamily. In terms of assembly, homodimer and homohexamer; in equilibrium.

The enzyme catalyses UMP + diphosphate = 5-phospho-alpha-D-ribose 1-diphosphate + uracil. Regulates transcriptional attenuation of the pyrimidine nucleotide (pyr) operon by binding in a uridine-dependent manner to specific sites on pyr mRNA. This disrupts an antiterminator hairpin in the RNA and favors formation of a downstream transcription terminator, leading to a reduced expression of downstream genes. In terms of biological role, also displays a weak uracil phosphoribosyltransferase activity which is not physiologically significant. This chain is Bifunctional protein PyrR, found in Caldicellulosiruptor bescii (strain ATCC BAA-1888 / DSM 6725 / KCTC 15123 / Z-1320) (Anaerocellum thermophilum).